The chain runs to 382 residues: Succinyl-diaminopimelate desuccinylase (382 aa).

Histidine 73 contributes to the Zn(2+) binding site. The active site involves aspartate 75. Residue aspartate 106 participates in Zn(2+) binding. Glutamate 140 acts as the Proton acceptor in catalysis. 3 residues coordinate Zn(2+): glutamate 141, glutamate 169, and histidine 355.

Belongs to the peptidase M20A family. DapE subfamily. In terms of assembly, homodimer. It depends on Zn(2+) as a cofactor. Co(2+) serves as cofactor.

The catalysed reaction is N-succinyl-(2S,6S)-2,6-diaminopimelate + H2O = (2S,6S)-2,6-diaminopimelate + succinate. It functions in the pathway amino-acid biosynthesis; L-lysine biosynthesis via DAP pathway; LL-2,6-diaminopimelate from (S)-tetrahydrodipicolinate (succinylase route): step 3/3. Functionally, catalyzes the hydrolysis of N-succinyl-L,L-diaminopimelic acid (SDAP), forming succinate and LL-2,6-diaminopimelate (DAP), an intermediate involved in the bacterial biosynthesis of lysine and meso-diaminopimelic acid, an essential component of bacterial cell walls. This is Succinyl-diaminopimelate desuccinylase from Saccharophagus degradans (strain 2-40 / ATCC 43961 / DSM 17024).